Here is a 384-residue protein sequence, read N- to C-terminus: Anhydro-N-acetylmuramic acid kinase (384 aa).

ATP is bound at residue 17 to 24 (GTSMDGVD).

Belongs to the anhydro-N-acetylmuramic acid kinase family.

It carries out the reaction 1,6-anhydro-N-acetyl-beta-muramate + ATP + H2O = N-acetyl-D-muramate 6-phosphate + ADP + H(+). Its pathway is amino-sugar metabolism; 1,6-anhydro-N-acetylmuramate degradation. It functions in the pathway cell wall biogenesis; peptidoglycan recycling. Its function is as follows. Catalyzes the specific phosphorylation of 1,6-anhydro-N-acetylmuramic acid (anhMurNAc) with the simultaneous cleavage of the 1,6-anhydro ring, generating MurNAc-6-P. Is required for the utilization of anhMurNAc either imported from the medium or derived from its own cell wall murein, and thus plays a role in cell wall recycling. This Burkholderia thailandensis (strain ATCC 700388 / DSM 13276 / CCUG 48851 / CIP 106301 / E264) protein is Anhydro-N-acetylmuramic acid kinase.